A 428-amino-acid polypeptide reads, in one-letter code: Folylpolyglutamate synthase (428 aa).

49–52 is a binding site for ATP; sequence GKGS. Residue Ser-73 participates in Mg(2+) binding. (6R)-5,10-methylenetetrahydrofolyl-(gamma-L-Glu)n-binding residues include Phe-75 and Arg-82. Mg(2+) contacts are provided by Glu-143 and His-170. At Lys-185 the chain carries N6-carboxylysine. ATP is bound by residues Asn-264, Arg-300, and 313 to 316; that span reads DGAH. Ser-417 contributes to the (6R)-5,10-methylenetetrahydrofolyl-(gamma-L-Glu)n binding site.

This sequence belongs to the folylpolyglutamate synthase family. As to quaternary structure, monomer. It depends on Mg(2+) as a cofactor.

The catalysed reaction is (6S)-5,6,7,8-tetrahydrofolyl-(gamma-L-Glu)(n) + L-glutamate + ATP = (6S)-5,6,7,8-tetrahydrofolyl-(gamma-L-Glu)(n+1) + ADP + phosphate + H(+). It catalyses the reaction (6R)-5,10-methylenetetrahydrofolyl-(gamma-L-Glu)(n) + L-glutamate + ATP = (6R)-5,10-methylenetetrahydrofolyl-(gamma-L-Glu)(n+1) + ADP + phosphate + H(+). It carries out the reaction 10-formyltetrahydrofolyl-(gamma-L-Glu)(n) + L-glutamate + ATP = 10-formyltetrahydrofolyl-(gamma-L-Glu)(n+1) + ADP + phosphate + H(+). Its activity is regulated as follows. Competitively inhibited by adenosine 5'-(3-thio)triphosphate and beta,gamma-methylene-ATP. Involved in the conversion of folates to polyglutamate derivatives, and likely functions in the retention of cellular folate pools. Catalyzes successive MgATP-dependent additions of glutamate to a pteroylmonoglutamate substrate, with a high preference for 5,10-methylenetetrahydrofolate (mTHF). Thus, metabolizes mTHF to the tetraglutamate derivative, but longer glutamate chain length products are not observed. Tetrahydrofolate (H4PteGlu) and 10-formyl-H4PteGlu are poorer folate substrates. In contrast to E.coli FolC, this enzyme does not display dihydrofolate synthase activity. The sequence is that of Folylpolyglutamate synthase from Lacticaseibacillus casei (Lactobacillus casei).